A 594-amino-acid chain; its full sequence is CDPK-related kinase 4 (594 aa).

The tract at residues 1 to 131 (MGHCYSRNIS…DSGGGERLDK (131 aa)) is disordered. G2 is lipidated: N-myristoyl glycine. Positions 37-58 (IPQSPVASGTPEVNSYNISPFQ) are enriched in polar residues. Positions 116–131 (VVDHGGDSGGGERLDK) are enriched in basic and acidic residues. In terms of domain architecture, Protein kinase spans 143-405 (YELGKEVGRG…AAQALAHPWL (263 aa)). ATP is bound by residues 149-157 (VGRGHFGHT) and K175. Residue D271 is the Proton acceptor of the active site. The residue at position 311 (S311) is a Phosphoserine. The autoinhibitory domain stretch occupies residues 409-439 (NPGLLLDFSVYKLVKSYIRASPFRRSALKAL). The calmodulin binding (CaMBD) stretch occupies residues 428–448 (ASPFRRSALKALSKAIPDEEL). EF-hand domains lie at 446–481 (EELV…ATDA), 482–517 (MMES…VYQL), 518–557 (EALE…GPSA), and 558–587 (YPLL…VTVR). Ca(2+)-binding residues include D462, K501, E506, N539, E546, S567, D569, and K571. S573 carries the phosphoserine modification.

Belongs to the protein kinase superfamily. Ser/Thr protein kinase family. CDPK subfamily. As to quaternary structure, binds calmodulin (CaM) in a calcium-dependent manner. Autophosphorylated.

Its subcellular location is the cell membrane. It catalyses the reaction L-seryl-[protein] + ATP = O-phospho-L-seryl-[protein] + ADP + H(+). The catalysed reaction is L-threonyl-[protein] + ATP = O-phospho-L-threonyl-[protein] + ADP + H(+). With respect to regulation, activated by calcium and calmodulin. Autophosphorylation may play an important role in the regulation of the kinase activity. Its function is as follows. May play a role in signal transduction pathways that involve calcium as a second messenger. This is CDPK-related kinase 4 (CRK4) from Arabidopsis thaliana (Mouse-ear cress).